The chain runs to 308 residues: Probable manganese-dependent inorganic pyrophosphatase (308 aa).

Residues histidine 9, aspartate 13, aspartate 15, aspartate 75, histidine 97, and aspartate 149 each contribute to the Mn(2+) site.

Belongs to the PPase class C family. Mn(2+) serves as cofactor.

The protein resides in the cytoplasm. It catalyses the reaction diphosphate + H2O = 2 phosphate + H(+). The chain is Probable manganese-dependent inorganic pyrophosphatase from Listeria monocytogenes serotype 4a (strain HCC23).